We begin with the raw amino-acid sequence, 272 residues long: Streptomycin 3''-kinase (272 aa).

The active-site Proton acceptor is Asp-190.

Belongs to the aminoglycoside phosphotransferase family.

It carries out the reaction streptomycin + ATP = streptomycin 3''-phosphate + ADP + H(+). The aminoglycoside phosphotransferases achieve inactivation of their antibiotic substrates by phosphorylation. This is Streptomycin 3''-kinase (aphE) from Streptomyces griseus.